A 254-amino-acid chain; its full sequence is 3-deoxy-manno-octulosonate cytidylyltransferase (254 aa).

Belongs to the KdsB family.

Its subcellular location is the cytoplasm. It carries out the reaction 3-deoxy-alpha-D-manno-oct-2-ulosonate + CTP = CMP-3-deoxy-beta-D-manno-octulosonate + diphosphate. The protein operates within nucleotide-sugar biosynthesis; CMP-3-deoxy-D-manno-octulosonate biosynthesis; CMP-3-deoxy-D-manno-octulosonate from 3-deoxy-D-manno-octulosonate and CTP: step 1/1. It participates in bacterial outer membrane biogenesis; lipopolysaccharide biosynthesis. In terms of biological role, activates KDO (a required 8-carbon sugar) for incorporation into bacterial lipopolysaccharide in Gram-negative bacteria. This is 3-deoxy-manno-octulosonate cytidylyltransferase from Pseudomonas fluorescens (strain ATCC BAA-477 / NRRL B-23932 / Pf-5).